Consider the following 397-residue polypeptide: MAKKTIKDVDLKDKKVLVRVDFNVPLKDGVITNDNRIVAALPTIKYVIENGGKAILFSHLGRVKTEEDKAGKSLKPVAERLSELLGQPVTFVPETRGKELEDAVNNMKDGDVLVFENTRFEDVDGKKESGNDAELGKYWASLGDVFVNDAFGTAHRAHASNVGIASTGIPTVAGFLMEKEIKFIGEAVENPKRPFVAILGGAKVSDKIAVIENLIEKADKILIGGGMAYTFMKAQGYSVGLSLLEEDKVDLAKSLMEKAGDKLVLPVDTVVSKEFSNDAPFHTVPSTEIPDDEEGLDIGEKTIELFANELQGAKTVVWNGPMGVFEMSNFAKGTIGVCEAIANLEDATTIIGGGDSAAAAIQLGYENKFSHISTGGGASLELLEGKTLPGLASINDK.

Residues 21 to 23 (DFN), R36, 59 to 62 (HLGR), R119, and R156 each bind substrate. Residues K207, G295, E326, and 353 to 356 (GGDS) each bind ATP.

Belongs to the phosphoglycerate kinase family. In terms of assembly, monomer.

It is found in the cytoplasm. It catalyses the reaction (2R)-3-phosphoglycerate + ATP = (2R)-3-phospho-glyceroyl phosphate + ADP. Its pathway is carbohydrate degradation; glycolysis; pyruvate from D-glyceraldehyde 3-phosphate: step 2/5. The polypeptide is Phosphoglycerate kinase (Enterococcus faecalis (strain ATCC 700802 / V583)).